The chain runs to 609 residues: Large ribosomal subunit assembly factor BipA (609 aa).

The region spanning 3–198 (QNIRNIAIIA…AIIKYAPAPN (196 aa)) is the tr-type G domain. GTP is bound by residues 15-20 (DHGKTT) and 128-131 (NKID).

The protein belongs to the TRAFAC class translation factor GTPase superfamily. Classic translation factor GTPase family. BipA subfamily. Monomer.

It localises to the cytoplasm. The enzyme catalyses GTP + H2O = GDP + phosphate + H(+). Functionally, a 50S ribosomal subunit assembly protein with GTPase activity, required for 50S subunit assembly at low temperatures, may also play a role in translation. Binds GTP and analogs. Binds the 70S ribosome between the 30S and 50S subunits, in a similar position as ribosome-bound EF-G; it contacts a number of ribosomal proteins, both rRNAs and the A-site tRNA. The polypeptide is Large ribosomal subunit assembly factor BipA (Buchnera aphidicola subsp. Schizaphis graminum (strain Sg)).